The primary structure comprises 385 residues: FK506-binding protein 5 (385 aa).

Positions 26 to 115 (TNFVSVHYDA…RFEVELIGFW (90 aa)) constitute a PPIase FKBP-type domain. 3 TPR repeats span residues 128–161 (AEKK…IQDL), 177–210 (VSIQ…DMTK), and 211–244 (IKAY…AIGL).

It catalyses the reaction [protein]-peptidylproline (omega=180) = [protein]-peptidylproline (omega=0). With respect to regulation, inhibited by both FK506 and rapamycin. Its function is as follows. PPIases accelerate the folding of proteins. It catalyzes the cis-trans isomerization of proline imidic peptide bonds in oligopeptides. The chain is FK506-binding protein 5 (FKBP5) from Rhizopus delemar (strain RA 99-880 / ATCC MYA-4621 / FGSC 9543 / NRRL 43880) (Mucormycosis agent).